Here is a 450-residue protein sequence, read N- to C-terminus: Phosphoglucosamine mutase (450 aa).

The active-site Phosphoserine intermediate is S101. 4 residues coordinate Mg(2+): S101, D241, D243, and D245. S101 carries the post-translational modification Phosphoserine.

It belongs to the phosphohexose mutase family. Mg(2+) serves as cofactor. Activated by phosphorylation.

It carries out the reaction alpha-D-glucosamine 1-phosphate = D-glucosamine 6-phosphate. Its function is as follows. Catalyzes the conversion of glucosamine-6-phosphate to glucosamine-1-phosphate. The polypeptide is Phosphoglucosamine mutase (Listeria monocytogenes serotype 4b (strain F2365)).